Reading from the N-terminus, the 123-residue chain is Immunoglobulin lambda variable 5-39 (123 aa).

Residues 1-19 (MAWTPLLLLLLSHCTGSLS) form the signal peptide. The tract at residues 20–44 (QPVLTQPTSLSASPGASARFTCTLR) is framework-1. One can recognise an Ig-like domain in the interval 21-123 (PVLTQPTSLS…YCAIWYSSTS (103 aa)). The cysteines at positions 41 and 115 are disulfide-linked. The interval 45 to 53 (SGINVGTYR) is complementarity-determining-1. Residues 54–70 (IYWYQQKPGSLPRYLLR) form a framework-2 region. The complementarity-determining-2 stretch occupies residues 71 to 77 (YKSDSDK). A framework-3 region spans residues 78–115 (QQGSGVPSRFSGSKDASTNAGLLLISGLQSEDEADYYC). Residues 116–123 (AIWYSSTS) form a complementarity-determining-3 region.

Immunoglobulins are composed of two identical heavy chains and two identical light chains; disulfide-linked.

Its subcellular location is the secreted. It is found in the cell membrane. Functionally, v region of the variable domain of immunoglobulin light chains that participates in the antigen recognition. Immunoglobulins, also known as antibodies, are membrane-bound or secreted glycoproteins produced by B lymphocytes. In the recognition phase of humoral immunity, the membrane-bound immunoglobulins serve as receptors which, upon binding of a specific antigen, trigger the clonal expansion and differentiation of B lymphocytes into immunoglobulins-secreting plasma cells. Secreted immunoglobulins mediate the effector phase of humoral immunity, which results in the elimination of bound antigens. The antigen binding site is formed by the variable domain of one heavy chain, together with that of its associated light chain. Thus, each immunoglobulin has two antigen binding sites with remarkable affinity for a particular antigen. The variable domains are assembled by a process called V-(D)-J rearrangement and can then be subjected to somatic hypermutations which, after exposure to antigen and selection, allow affinity maturation for a particular antigen. The sequence is that of Immunoglobulin lambda variable 5-39 from Homo sapiens (Human).